The sequence spans 116 residues: Vitelline membrane protein Vm32E (116 aa).

Positions 1-17 are cleaved as a signal peptide; sequence MKIVAFTLVAFVALAGA. The region spanning 36–73 is the VM domain; the sequence is GYPAPPCPTNYLFSCQPNLAPAPCAQEAPAYGSAGAYT.

The protein belongs to the vitelline membrane family.

It is found in the secreted. Major early eggshell protein. The chain is Vitelline membrane protein Vm32E from Drosophila santomea (Fruit fly).